The sequence spans 155 residues: NADH-ubiquinone oxidoreductase chain 6 (155 aa).

4 helical membrane-spanning segments follow: residues 1 to 21, 42 to 62, 71 to 91, and 121 to 141; these read MLGS…PLAF, WISL…FIYV, FAVD…SFLV, and LTML…LLVI.

It belongs to the complex I subunit 6 family.

It localises to the mitochondrion membrane. It carries out the reaction a ubiquinone + NADH + 5 H(+)(in) = a ubiquinol + NAD(+) + 4 H(+)(out). Its function is as follows. Core subunit of the mitochondrial membrane respiratory chain NADH dehydrogenase (Complex I) that is believed to belong to the minimal assembly required for catalysis. Complex I functions in the transfer of electrons from NADH to the respiratory chain. The immediate electron acceptor for the enzyme is believed to be ubiquinone. This chain is NADH-ubiquinone oxidoreductase chain 6 (ND6), found in Artemia franciscana (Brine shrimp).